A 161-amino-acid chain; its full sequence is Probable chemoreceptor glutamine deamidase CheD (161 aa).

The protein belongs to the CheD family.

It catalyses the reaction L-glutaminyl-[protein] + H2O = L-glutamyl-[protein] + NH4(+). Probably deamidates glutamine residues to glutamate on methyl-accepting chemotaxis receptors (MCPs), playing an important role in chemotaxis. The chain is Probable chemoreceptor glutamine deamidase CheD from Thermococcus kodakarensis (strain ATCC BAA-918 / JCM 12380 / KOD1) (Pyrococcus kodakaraensis (strain KOD1)).